Here is a 46-residue protein sequence, read N- to C-terminus: Endochitinase 4 (46 aa).

The protein belongs to the glycosyl hydrolase 19 family. Chitinase class I subfamily.

It carries out the reaction Random endo-hydrolysis of N-acetyl-beta-D-glucosaminide (1-&gt;4)-beta-linkages in chitin and chitodextrins.. Its function is as follows. Defense against chitin-containing fungal and bacterial pathogens. This chain is Endochitinase 4, found in Arachis hypogaea (Peanut).